The chain runs to 783 residues: ATP-dependent zinc metalloprotease FtsH (783 aa).

Low complexity predominate over residues 1 to 16; the sequence is MSETPNTNEQNNPNNQ. The tract at residues 1-79 is disordered; sequence MSETPNTNEQ…DKEEDFASRL (79 aa). Residues 1–86 lie on the Cytoplasmic side of the membrane; the sequence is MSETPNTNEQ…SRLNTRPPQR (86 aa). Residues 35–61 show a composition bias toward basic and acidic residues; that stretch reads MPERPERHNQADGAPKRPGDDDRKSER. Residues 87 to 107 traverse the membrane as a helical segment; sequence ASIITIIIIFLVAFFIGSQMM. Topologically, residues 108–233 are extracellular; the sequence is NMVHGEETDD…EYQVTLPSNV (126 aa). The helical transmembrane segment at 234–254 threads the bilayer; it reads TEILISVLPMLLFAGLLIYFF. Residues 255–783 are Cytoplasmic-facing; the sequence is SQMSKANNSQ…APQPPAAPQQ (529 aa). 325–332 is a binding site for ATP; that stretch reads GPPGTGKT. Zn(2+) is bound at residue His547. Glu548 is an active-site residue. Positions 551 and 623 each coordinate Zn(2+). Over residues 738–771 the composition is skewed to low complexity; the sequence is EAAAKAADQAEQPQVEAEPVAQVATPAAPVAPAV. The interval 738–783 is disordered; it reads EAAAKAADQAEQPQVEAEPVAQVATPAAPVAPAVPEAPQPPAAPQQ. Residues 772–783 are compositionally biased toward pro residues; that stretch reads PEAPQPPAAPQQ.

In the central section; belongs to the AAA ATPase family. This sequence in the C-terminal section; belongs to the peptidase M41 family. As to quaternary structure, homohexamer. Zn(2+) serves as cofactor.

Its subcellular location is the cell membrane. In terms of biological role, acts as a processive, ATP-dependent zinc metallopeptidase for both cytoplasmic and membrane proteins. Plays a role in the quality control of integral membrane proteins. The polypeptide is ATP-dependent zinc metalloprotease FtsH (Slackia heliotrinireducens (strain ATCC 29202 / DSM 20476 / NCTC 11029 / RHS 1) (Peptococcus heliotrinreducens)).